We begin with the raw amino-acid sequence, 286 residues long: ATP synthase gamma chain (286 aa).

The protein belongs to the ATPase gamma chain family. F-type ATPases have 2 components, CF(1) - the catalytic core - and CF(0) - the membrane proton channel. CF(1) has five subunits: alpha(3), beta(3), gamma(1), delta(1), epsilon(1). CF(0) has three main subunits: a, b and c.

The protein resides in the cell inner membrane. Produces ATP from ADP in the presence of a proton gradient across the membrane. The gamma chain is believed to be important in regulating ATPase activity and the flow of protons through the CF(0) complex. The sequence is that of ATP synthase gamma chain from Pseudomonas syringae pv. tomato (strain ATCC BAA-871 / DC3000).